The chain runs to 339 residues: DNA-directed RNA polymerase subunit alpha (339 aa).

Positions 1–233 are alpha N-terminal domain (alpha-NTD); it reads MVREEVAGST…DLFLPFLHAE (233 aa). Residues 264–339 form an alpha C-terminal domain (alpha-CTD) region; sequence KKGIPLNCIF…IDLLKNKLSF (76 aa).

Belongs to the RNA polymerase alpha chain family. In plastids the minimal PEP RNA polymerase catalytic core is composed of four subunits: alpha, beta, beta', and beta''. When a (nuclear-encoded) sigma factor is associated with the core the holoenzyme is formed, which can initiate transcription.

Its subcellular location is the plastid. The protein resides in the chloroplast. It carries out the reaction RNA(n) + a ribonucleoside 5'-triphosphate = RNA(n+1) + diphosphate. In terms of biological role, DNA-dependent RNA polymerase catalyzes the transcription of DNA into RNA using the four ribonucleoside triphosphates as substrates. This is DNA-directed RNA polymerase subunit alpha from Thinopyrum bessarabicum (Wheatgrass).